We begin with the raw amino-acid sequence, 1330 residues long: Sister chromatid cohesion protein PDS5 homolog A (1330 aa).

The HEAT repeat unit spans residues 387–423; it reads SLVNDQLLGFVRERTLDKRWRVRKEAMMGLAQLYKKY. Positions 1138–1330 are disordered; that stretch reads VNKPLSATGR…AAQRQIDLQR (193 aa). Positions 1160–1171 are enriched in low complexity; it reads SNISVNSELSSS. Residues 1216–1225 show a composition bias toward polar residues; it reads SDQATQGNST.

Belongs to the PDS5 family. Interacts with the cohesin complex. Binds chromatin in a cohesin-dependent manner.

It is found in the nucleus. May regulate sister chromatid cohesion during mitosis and couple it to DNA replication. The sequence is that of Sister chromatid cohesion protein PDS5 homolog A from Gallus gallus (Chicken).